The primary structure comprises 473 residues: Photosystem II CP43 reaction center protein (473 aa).

A propeptide spanning residues M1–E14 is cleaved from the precursor. At T15 the chain carries N-acetylthreonine. At T15 the chain carries Phosphothreonine. Transmembrane regions (helical) follow at residues L69 to A93, L134 to N155, K178 to T200, K255 to S275, and W291 to A312. E367 lines the [CaMn4O5] cluster pocket. A helical transmembrane segment spans residues R447–P471.

The protein belongs to the PsbB/PsbC family. PsbC subfamily. In terms of assembly, PSII is composed of 1 copy each of membrane proteins PsbA, PsbB, PsbC, PsbD, PsbE, PsbF, PsbH, PsbI, PsbJ, PsbK, PsbL, PsbM, PsbT, PsbX, PsbY, PsbZ, Psb30/Ycf12, at least 3 peripheral proteins of the oxygen-evolving complex and a large number of cofactors. It forms dimeric complexes. Binds multiple chlorophylls and provides some of the ligands for the Ca-4Mn-5O cluster of the oxygen-evolving complex. It may also provide a ligand for a Cl- that is required for oxygen evolution. PSII binds additional chlorophylls, carotenoids and specific lipids. is required as a cofactor.

It localises to the plastid. Its subcellular location is the chloroplast thylakoid membrane. Its function is as follows. One of the components of the core complex of photosystem II (PSII). It binds chlorophyll and helps catalyze the primary light-induced photochemical processes of PSII. PSII is a light-driven water:plastoquinone oxidoreductase, using light energy to abstract electrons from H(2)O, generating O(2) and a proton gradient subsequently used for ATP formation. The sequence is that of Photosystem II CP43 reaction center protein from Oenothera argillicola (Appalachian evening primrose).